Here is a 227-residue protein sequence, read N- to C-terminus: Myogenin (227 aa).

In terms of domain architecture, bHLH spans 82 to 133; the sequence is DRRRAATLREKRRLKKVNEAFEALKRSTLLNPNQRLPKVEILRSAIQYIERL. The interval 147–196 is disordered; it reads QRELRYRPAAPQPAAPSECGSGSSSCSPEWSTQLEFGTNPADHLLSDDQA. Over residues 161–175 the composition is skewed to low complexity; that stretch reads APSECGSGSSSCSPE.

As to quaternary structure, homodimer and heterodimer. Efficient DNA binding requires dimerization with another bHLH protein.

It localises to the nucleus. In terms of biological role, acts as a transcriptional activator that promotes transcription of muscle-specific target genes and plays a role in muscle differentiation. Induces fibroblasts to differentiate into myoblasts. Probable sequence specific DNA-binding protein. This chain is Myogenin (MYOG), found in Gallus gallus (Chicken).